The primary structure comprises 299 residues: Coenzyme PQQ synthesis protein B (299 aa).

This sequence belongs to the PqqB family.

Its pathway is cofactor biosynthesis; pyrroloquinoline quinone biosynthesis. Its function is as follows. May be involved in the transport of PQQ or its precursor to the periplasm. This is Coenzyme PQQ synthesis protein B from Xanthomonas euvesicatoria pv. vesicatoria (strain 85-10) (Xanthomonas campestris pv. vesicatoria).